We begin with the raw amino-acid sequence, 273 residues long: Histone H1.2 (273 aa).

Positions methionine 1–proline 63 are disordered. N-acetylserine is present on serine 2. A Phosphoserine modification is found at serine 14. Over residues glycine 33 to threonine 59 the composition is skewed to basic residues. Residues serine 61–serine 130 form the H15 domain. Residues lysine 156 and lysine 165 each participate in a glycyl lysine isopeptide (Lys-Gly) (interchain with G-Cter in ubiquitin) cross-link. 2 stretches are compositionally biased toward low complexity: residues lysine 193–lysine 216 and lysine 237–serine 256. Residues lysine 193 to lysine 273 form a disordered region. Residues valine 257 to lysine 273 are compositionally biased toward basic residues.

Belongs to the histone H1/H5 family.

The protein resides in the nucleus. It is found in the chromosome. Histones H1 are necessary for the condensation of nucleosome chains into higher-order structures. In Arabidopsis thaliana (Mouse-ear cress), this protein is Histone H1.2.